We begin with the raw amino-acid sequence, 70 residues long: Exodeoxyribonuclease 7 small subunit (70 aa).

This sequence belongs to the XseB family. As to quaternary structure, heterooligomer composed of large and small subunits.

The protein resides in the cytoplasm. The enzyme catalyses Exonucleolytic cleavage in either 5'- to 3'- or 3'- to 5'-direction to yield nucleoside 5'-phosphates.. Bidirectionally degrades single-stranded DNA into large acid-insoluble oligonucleotides, which are then degraded further into small acid-soluble oligonucleotides. The protein is Exodeoxyribonuclease 7 small subunit of Magnetococcus marinus (strain ATCC BAA-1437 / JCM 17883 / MC-1).